A 124-amino-acid chain; its full sequence is UPF0299 membrane protein VIBHAR_02118 (124 aa).

4 consecutive transmembrane segments (helical) span residues 6–26, 35–55, 72–92, and 95–115; these read LLQL…LGIG, VSVP…TLGL, MILL…MLLA, and LPII…LAWF.

It belongs to the UPF0299 family.

The protein localises to the cell inner membrane. The chain is UPF0299 membrane protein VIBHAR_02118 from Vibrio campbellii (strain ATCC BAA-1116).